A 395-amino-acid chain; its full sequence is Carbohydrate sulfotransferase 5 (395 aa).

The Cytoplasmic portion of the chain corresponds to 1–7 (MRLPRFS). The helical; Signal-anchor for type II membrane protein transmembrane segment at 8 to 26 (STVMLSLLMVQTGILVFLV) threads the bilayer. Topologically, residues 27–395 (SRQVPSSPAG…ASSTEKQPES (369 aa)) are lumenal. 49 to 55 (WRSGSSF) provides a ligand contact to 3'-phosphoadenylyl sulfate. 2 N-linked (GlcNAc...) asparagine glycosylation sites follow: Asn116 and Asn142. 3'-phosphoadenylyl sulfate is bound at residue 202 to 210 (RDPRAVLRS). Asn229 and Asn305 each carry an N-linked (GlcNAc...) asparagine glycan.

Belongs to the sulfotransferase 1 family. Gal/GlcNAc/GalNAc subfamily. Expressed in cornea.

It localises to the golgi apparatus membrane. In terms of biological role, sulfotransferase that utilizes 3'-phospho-5'-adenylyl sulfate (PAPS) as sulfonate donor to catalyze the transfer of sulfate to position 6 of non-reducing N-acetylglucosamine (GlcNAc) residues of keratan. Mediates sulfation of keratan in cornea. Keratan sulfate plays a central role in maintaining corneal transparency. Acts on the non-reducing terminal GlcNAc of short and long carbohydrate substrates that have poly-N-acetyllactosamine structures. May also have activity toward O-linked sugars of mucin-type acceptors. This chain is Carbohydrate sulfotransferase 5 (Chst5), found in Mus musculus (Mouse).